Reading from the N-terminus, the 277-residue chain is uncharacterized protein (277 aa).

The next 5 helical transmembrane spans lie at 46–66 (IAAIAAGFAIATAVIVAYGGL), 73–93 (LFEGFASYLAVGVLTYMILWM), 143–163 (TTVIGASAGAAVAITLAVLIL), 174–194 (FFYATSVLLAFIAAGLLGYGT), and 228–248 (KGLIGGILAVMFGYSASMEWV).

Belongs to the oxidase-dependent Fe transporter (OFeT) (TC 9.A.10.1) family.

It localises to the cell membrane. This is an uncharacterized protein from Archaeoglobus fulgidus (strain ATCC 49558 / DSM 4304 / JCM 9628 / NBRC 100126 / VC-16).